The following is a 232-amino-acid chain: Ubiquinone biosynthesis O-methyltransferase (232 aa).

S-adenosyl-L-methionine is bound by residues Arg36, Gly55, Asp76, and Leu120.

This sequence belongs to the methyltransferase superfamily. UbiG/COQ3 family.

It carries out the reaction a 3-demethylubiquinol + S-adenosyl-L-methionine = a ubiquinol + S-adenosyl-L-homocysteine + H(+). It catalyses the reaction a 3-(all-trans-polyprenyl)benzene-1,2-diol + S-adenosyl-L-methionine = a 2-methoxy-6-(all-trans-polyprenyl)phenol + S-adenosyl-L-homocysteine + H(+). Its pathway is cofactor biosynthesis; ubiquinone biosynthesis. Its function is as follows. O-methyltransferase that catalyzes the 2 O-methylation steps in the ubiquinone biosynthetic pathway. The polypeptide is Ubiquinone biosynthesis O-methyltransferase (Azotobacter vinelandii (strain DJ / ATCC BAA-1303)).